A 1465-amino-acid chain; its full sequence is DNA polymerase III PolC-type (1465 aa).

Residues 427 to 583 form the Exonuclease domain; that stretch reads YVVFDVETTG…YDAEATGRLL (157 aa).

This sequence belongs to the DNA polymerase type-C family. PolC subfamily.

The protein resides in the cytoplasm. The enzyme catalyses DNA(n) + a 2'-deoxyribonucleoside 5'-triphosphate = DNA(n+1) + diphosphate. Required for replicative DNA synthesis. This DNA polymerase also exhibits 3' to 5' exonuclease activity. The protein is DNA polymerase III PolC-type of Streptococcus pyogenes serotype M2 (strain MGAS10270).